The following is a 217-amino-acid chain: MSVSSNASSASNKDSVDSPSSTTNTDSSELTHILNRRQEIMESQEAGIEVRRTYKVVNVYTDFPEFSRNQIKDYQKTFNTYDTARDGFLDLQELKFMMEKLGAPQTHLGLKQMIAEVDEDNDGKISFREFLLIFRKAQAGELDSDSGLNQLARLTEVDVEQVGVSGAKNFFEAKIEQQLRTNKFHDEIRAEQEERRREEEERAQRRQQFQQRAAIFQ.

A compositionally biased stretch (low complexity) spans 1 to 28 (MSVSSNASSASNKDSVDSPSSTTNTDSS). A disordered region spans residues 1 to 29 (MSVSSNASSASNKDSVDSPSSTTNTDSSE). EF-hand domains are found at residues 69 to 104 (NQIK…LGAP) and 105 to 140 (QTHL…AQAG). 8 residues coordinate Ca(2+): D82, D86, E93, D118, D120, D122, K124, and E129. The span at 191 to 204 (EQEERRREEEERAQ) shows a compositional bias: basic and acidic residues. The disordered stretch occupies residues 191–217 (EQEERRREEEERAQRRQQFQQRAAIFQ). The span at 206 to 217 (RQQFQQRAAIFQ) shows a compositional bias: low complexity.

This is EF-hand domain-containing protein D2 homolog (Swip-1) from Drosophila melanogaster (Fruit fly).